A 428-amino-acid polypeptide reads, in one-letter code: Serine--tRNA ligase (428 aa).

Residue 231-233 (TSE) coordinates L-serine. ATP is bound by residues 262–264 (RRE) and Val-278. Glu-285 is an L-serine binding site. 349–352 (ELTS) lines the ATP pocket. Residue Thr-384 participates in L-serine binding.

This sequence belongs to the class-II aminoacyl-tRNA synthetase family. Type-1 seryl-tRNA synthetase subfamily. As to quaternary structure, homodimer. The tRNA molecule binds across the dimer.

It localises to the cytoplasm. It carries out the reaction tRNA(Ser) + L-serine + ATP = L-seryl-tRNA(Ser) + AMP + diphosphate + H(+). The catalysed reaction is tRNA(Sec) + L-serine + ATP = L-seryl-tRNA(Sec) + AMP + diphosphate + H(+). It functions in the pathway aminoacyl-tRNA biosynthesis; selenocysteinyl-tRNA(Sec) biosynthesis; L-seryl-tRNA(Sec) from L-serine and tRNA(Sec): step 1/1. Functionally, catalyzes the attachment of serine to tRNA(Ser). Is also able to aminoacylate tRNA(Sec) with serine, to form the misacylated tRNA L-seryl-tRNA(Sec), which will be further converted into selenocysteinyl-tRNA(Sec). In Bifidobacterium longum (strain DJO10A), this protein is Serine--tRNA ligase.